The sequence spans 359 residues: Peptide chain release factor 1 (359 aa).

Glutamine 236 carries the N5-methylglutamine modification.

The protein belongs to the prokaryotic/mitochondrial release factor family. In terms of processing, methylated by PrmC. Methylation increases the termination efficiency of RF1.

Its subcellular location is the cytoplasm. Functionally, peptide chain release factor 1 directs the termination of translation in response to the peptide chain termination codons UAG and UAA. The sequence is that of Peptide chain release factor 1 from Streptococcus pneumoniae (strain Hungary19A-6).